A 645-amino-acid polypeptide reads, in one-letter code: 1-deoxy-D-xylulose-5-phosphate synthase 1 (645 aa).

Thiamine diphosphate-binding positions include H79 and 120–122 (GHS). Mg(2+) is bound at residue D151. Thiamine diphosphate contacts are provided by residues 152 to 153 (GS), N180, Y291, and E373. Mg(2+) is bound at residue N180.

This sequence belongs to the transketolase family. DXPS subfamily. As to quaternary structure, homodimer. Mg(2+) serves as cofactor. It depends on thiamine diphosphate as a cofactor.

The catalysed reaction is D-glyceraldehyde 3-phosphate + pyruvate + H(+) = 1-deoxy-D-xylulose 5-phosphate + CO2. It functions in the pathway metabolic intermediate biosynthesis; 1-deoxy-D-xylulose 5-phosphate biosynthesis; 1-deoxy-D-xylulose 5-phosphate from D-glyceraldehyde 3-phosphate and pyruvate: step 1/1. Catalyzes the acyloin condensation reaction between C atoms 2 and 3 of pyruvate and glyceraldehyde 3-phosphate to yield 1-deoxy-D-xylulose-5-phosphate (DXP). In Rhodospirillum rubrum (strain ATCC 11170 / ATH 1.1.1 / DSM 467 / LMG 4362 / NCIMB 8255 / S1), this protein is 1-deoxy-D-xylulose-5-phosphate synthase 1.